Reading from the N-terminus, the 456-residue chain is Phosphomethylpyrimidine synthase (456 aa).

Substrate contacts are provided by residues asparagine 80, methionine 109, tyrosine 139, histidine 175, 195 to 197 (SRG), 236 to 239 (DSLR), and glutamate 275. Histidine 279 contributes to the Zn(2+) binding site. Position 302 (tyrosine 302) interacts with substrate. Histidine 343 is a Zn(2+) binding site. The [4Fe-4S] cluster site is built by cysteine 423, cysteine 426, and cysteine 431.

This sequence belongs to the ThiC family. It depends on [4Fe-4S] cluster as a cofactor.

It catalyses the reaction 5-amino-1-(5-phospho-beta-D-ribosyl)imidazole + S-adenosyl-L-methionine = 4-amino-2-methyl-5-(phosphooxymethyl)pyrimidine + CO + 5'-deoxyadenosine + formate + L-methionine + 3 H(+). Its pathway is cofactor biosynthesis; thiamine diphosphate biosynthesis. Its function is as follows. Catalyzes the synthesis of the hydroxymethylpyrimidine phosphate (HMP-P) moiety of thiamine from aminoimidazole ribotide (AIR) in a radical S-adenosyl-L-methionine (SAM)-dependent reaction. The polypeptide is Phosphomethylpyrimidine synthase (Synechococcus elongatus (strain ATCC 33912 / PCC 7942 / FACHB-805) (Anacystis nidulans R2)).